The chain runs to 158 residues: C-type lectin lectoxin-Enh7 (158 aa).

The signal sequence occupies residues 1-23; sequence MGQFTVVSLGLLAVFLSLSGAKG. 3 disulfides stabilise this stretch: C26–C37, C54–C154, and C129–C146. The 123-residue stretch at 33–155 folds into the C-type lectin domain; the sequence is RNGVCNKLFP…CASLHPFICQ (123 aa). Residues 119-121 carry the Mannose-binding motif; sequence EPN. Residues E127, N142, and D143 each coordinate Ca(2+).

Belongs to the true venom lectin family. As to expression, expressed by the venom gland.

It localises to the secreted. Functionally, mannose-binding lectin which recognizes specific carbohydrate structures and agglutinates a variety of animal cells by binding to cell-surface glycoproteins and glycolipids. May be a calcium-dependent lectin. The sequence is that of C-type lectin lectoxin-Enh7 from Pseudoferania polylepis (Macleay's water snake).